The following is an 81-amino-acid chain: Photosystem I iron-sulfur center (81 aa).

2 4Fe-4S ferredoxin-type domains span residues 1-31 (MSHKVKIYDTCIGCTQCVRACPLDVLEMVPW) and 39-68 (IASSPRTEDCVGCKRCETACPTDFLSIRVY). Cys11, Cys14, Cys17, Cys21, Cys48, Cys51, Cys54, and Cys58 together coordinate [4Fe-4S] cluster.

The cyanobacterial PSI reaction center is composed of one copy each of PsaA,B,C,D,E,F,I,J,K,L,M and X, and forms trimeric complexes. [4Fe-4S] cluster is required as a cofactor.

It localises to the cellular thylakoid membrane. The enzyme catalyses reduced [plastocyanin] + hnu + oxidized [2Fe-2S]-[ferredoxin] = oxidized [plastocyanin] + reduced [2Fe-2S]-[ferredoxin]. Functionally, apoprotein for the two 4Fe-4S centers FA and FB of photosystem I (PSI); essential for photochemical activity. FB is the terminal electron acceptor of PSI, donating electrons to ferredoxin. The C-terminus interacts with PsaA/B/D and helps assemble the protein into the PSI complex. Required for binding of PsaD and PsaE to PSI. PSI is a plastocyanin/cytochrome c6-ferredoxin oxidoreductase, converting photonic excitation into a charge separation, which transfers an electron from the donor P700 chlorophyll pair to the spectroscopically characterized acceptors A0, A1, FX, FA and FB in turn. The sequence is that of Photosystem I iron-sulfur center from Rippkaea orientalis (strain PCC 8801 / RF-1) (Cyanothece sp. (strain PCC 8801)).